The following is a 578-amino-acid chain: DNA primase (578 aa).

The CHC2-type zinc finger occupies 40–64; that stretch reads CPFHQEKTPSFTVNFEKQFYFCFGC. The 83-residue stretch at 257 to 339 folds into the Toprim domain; the sequence is KQILIVEGYV…GKNVKFIFLP (83 aa). Mg(2+) contacts are provided by Glu263, Asp307, and Asp309.

Belongs to the DnaG primase family. In terms of assembly, monomer. Interacts with DnaB. Requires Zn(2+) as cofactor. The cofactor is Mg(2+).

The catalysed reaction is ssDNA + n NTP = ssDNA/pppN(pN)n-1 hybrid + (n-1) diphosphate.. Functionally, RNA polymerase that catalyzes the synthesis of short RNA molecules used as primers for DNA polymerase during DNA replication. In Buchnera aphidicola subsp. Baizongia pistaciae (strain Bp), this protein is DNA primase.